A 485-amino-acid chain; its full sequence is WD repeat-containing protein 13 (485 aa).

N-acetylmethionine is present on Met-1. 3 positions are modified to phosphoserine: Ser-70, Ser-74, and Ser-79. Arg-114 carries the post-translational modification Asymmetric dimethylarginine; alternate. An Omega-N-methylarginine; alternate modification is found at Arg-114. WD repeat units follow at residues Gly-162–Leu-202, Thr-208–Ser-246, Arg-250–Ile-290, Lys-295–Met-335, Thr-341–Asn-389, Gln-394–Val-438, and Ala-444–Arg-482.

As to expression, widely expressed.

It localises to the nucleus. The chain is WD repeat-containing protein 13 (WDR13) from Homo sapiens (Human).